The chain runs to 878 residues: MLKNPFIKDSGLNQYQPLINQINALETNLKTLTDTELRNKTFELKKRYQEEQDLNALTAEAFAITREASFRTLGLRHFDVQLIGGLVLNSGKISEMRTGEGKTLVATLPAYLNALTDKGVHIVTVNDYLASRDQISMGQIYRFLGLDTGLIQEDMAFLERQQNYKAEITYVTNNEVAFDYLRDNMASNLSQVVLPPFNYCIVDEVDSIFIDEAQVPLIISQAVETCIDKYIVAAEVAEYLEVNVHFKVDEKNRNIILTEQGTAQIEKILQVEDLYNPNDPWIPYILSAIKATALFFRNVHYIVQNNQIIIVDEFTGRIMPDRRWNEGLHQAVEAKEGVPIRQNTETAASITYQNFFLLYPKLSGMTGTAKTSEVEFEKIYNLPVEEIPTARPNLRKDLPDFVYKDSLTKWTAIARECKSIANTKQPILIGTTTVENSEMLADLLQEYQLSYRLLNAKPENVKRESEIVAQAGEIGSITIATNMAGRGTDIILGGNTTFKVRKQLYNILVSYKSKTNLTKLNTIFPLAIDIKFTSQKFLSVLNSLLNDPKFLSLSSTGILKFLNEIDQIRIPKITYQCSIKFLLNELSKFEKKNQTIDNKIVKNLGGLYIIGTERNNSRRIDNQLRGRCGRQGDPGTSRFFLSLEDSLFRNFGSSKLQNFMQNQLLDDLPLESNLLTKSLDAAQKRVEERDYDGRKYLFDYDDILNKQRNIVYYERRKLLESQSLRETILAYGEQVIKDIITLLKDPKFPKTNSMIEELFKTRLVSLNSDLNSLDSFELKTYLFQEFWLSYETKVLEFEICQTGLIRSFERTIILYYTDIAWKEHLQKIALLRDAVGWRSYGQRNPLFEFKEEAYNLFQNRNITIRHLLIRDFLHSFIL.

Residues Gln81, 99-103, and Asp489 each bind ATP; that span reads GEGKT.

This sequence belongs to the SecA family.

Its subcellular location is the plastid. It is found in the chloroplast stroma. The protein localises to the chloroplast thylakoid membrane. It catalyses the reaction ATP + H2O + cellular proteinSide 1 = ADP + phosphate + cellular proteinSide 2.. Functionally, has a central role in coupling the hydrolysis of ATP to the transfer of proteins across the thylakoid membrane. This is Protein translocase subunit SecA from Thalassiosira pseudonana (Marine diatom).